A 236-amino-acid chain; its full sequence is Ubiquinone biosynthesis O-methyltransferase (236 aa).

S-adenosyl-L-methionine contacts are provided by Arg39, Gly59, Asp80, and Met124.

It belongs to the methyltransferase superfamily. UbiG/COQ3 family.

The catalysed reaction is a 3-demethylubiquinol + S-adenosyl-L-methionine = a ubiquinol + S-adenosyl-L-homocysteine + H(+). It catalyses the reaction a 3-(all-trans-polyprenyl)benzene-1,2-diol + S-adenosyl-L-methionine = a 2-methoxy-6-(all-trans-polyprenyl)phenol + S-adenosyl-L-homocysteine + H(+). Its pathway is cofactor biosynthesis; ubiquinone biosynthesis. O-methyltransferase that catalyzes the 2 O-methylation steps in the ubiquinone biosynthetic pathway. The polypeptide is Ubiquinone biosynthesis O-methyltransferase (Shewanella pealeana (strain ATCC 700345 / ANG-SQ1)).